The following is a 315-amino-acid chain: Glycine--tRNA ligase alpha subunit (315 aa).

It belongs to the class-II aminoacyl-tRNA synthetase family. As to quaternary structure, tetramer of two alpha and two beta subunits.

It is found in the cytoplasm. It catalyses the reaction tRNA(Gly) + glycine + ATP = glycyl-tRNA(Gly) + AMP + diphosphate. The sequence is that of Glycine--tRNA ligase alpha subunit from Pseudomonas aeruginosa (strain LESB58).